The primary structure comprises 122 residues: Large ribosomal subunit protein eL22B (122 aa).

This sequence belongs to the eukaryotic ribosomal protein eL22 family. As to quaternary structure, component of the large ribosomal subunit (LSU). Mature yeast ribosomes consist of a small (40S) and a large (60S) subunit. The 40S small subunit contains 1 molecule of ribosomal RNA (18S rRNA) and 33 different proteins (encoded by 57 genes). The large 60S subunit contains 3 rRNA molecules (25S, 5.8S and 5S rRNA) and 46 different proteins (encoded by 81 genes).

The protein localises to the cytoplasm. In terms of biological role, component of the ribosome, a large ribonucleoprotein complex responsible for the synthesis of proteins in the cell. The small ribosomal subunit (SSU) binds messenger RNAs (mRNAs) and translates the encoded message by selecting cognate aminoacyl-transfer RNA (tRNA) molecules. The large subunit (LSU) contains the ribosomal catalytic site termed the peptidyl transferase center (PTC), which catalyzes the formation of peptide bonds, thereby polymerizing the amino acids delivered by tRNAs into a polypeptide chain. The nascent polypeptides leave the ribosome through a tunnel in the LSU and interact with protein factors that function in enzymatic processing, targeting, and the membrane insertion of nascent chains at the exit of the ribosomal tunnel. In Saccharomyces cerevisiae (strain ATCC 204508 / S288c) (Baker's yeast), this protein is Large ribosomal subunit protein eL22B.